The chain runs to 674 residues: Glutaminase kidney isoform, mitochondrial (674 aa).

The N-terminal 54 residues, methionine 1–leucine 54, are a transit peptide targeting the mitochondrion. Positions proline 56–serine 123 are disordered. Residues tryptophan 58 to glycine 71 are compositionally biased toward gly residues. Residues proline 89–glycine 101 are compositionally biased toward low complexity. N6-succinyllysine is present on residues lysine 135 and lysine 169. Serine 291 serves as a coordination point for substrate. Lysine 316 carries the N6-acetyllysine modification. Residues glycine 320–phenylalanine 327 are highly mobile activation loop. The substrate site is built by asparagine 340, glutamate 386, asparagine 393, tyrosine 419, tyrosine 471, and valine 489. ANK repeat units follow at residues aspartate 590 to phenylalanine 619 and tryptophan 624 to proline 653. A disordered region spans residues threonine 652 to leucine 674. The residue at position 657 (serine 657) is a Phosphoserine. Over residues aspartate 658 to leucine 674 the composition is skewed to basic and acidic residues.

This sequence belongs to the glutaminase family. In terms of assembly, homotetramer, dimer of dimers. Tetramer composed of 68 and 65 kDa peptides in a 1:3 ratio. Can assemble into higher oligomers (in vitro), but the physiological significance of this is not clear. Interacts with RAF1 and MAP2K2. Interacts with ATCAY; the interaction is direct and may control GLS localization, negatively regulating its activity. Synthesized as a 74-kDa cytosolic precursor which is proteolytically processed by the mitochondrial-processing peptidase (MPP) via a 72-kDa intermediate to yield the mature mitochondrial 68- and 65-kDa subunits. In terms of tissue distribution, kidney, brain, and intestine.

It localises to the mitochondrion. It is found in the cytoplasm. Its subcellular location is the cytosol. The protein resides in the mitochondrion matrix. The catalysed reaction is L-glutamine + H2O = L-glutamate + NH4(+). Enzyme activity is increased by phosphate, due to increased kcat and increased substrate affinity. Catalyzes the first reaction in the primary pathway for the renal catabolism of glutamine. Plays a role in maintaining acid-base homeostasis. Regulates the levels of the neurotransmitter glutamate, the main excitatory neurotransmitter in the brain. The sequence is that of Glutaminase kidney isoform, mitochondrial (Gls) from Rattus norvegicus (Rat).